Reading from the N-terminus, the 80-residue chain is Small ribosomal subunit protein bS18A (80 aa).

The protein belongs to the bacterial ribosomal protein bS18 family. Part of the 30S ribosomal subunit. Forms a tight heterodimer with protein bS6.

Binds as a heterodimer with protein bS6 to the central domain of the 16S rRNA, where it helps stabilize the platform of the 30S subunit. This chain is Small ribosomal subunit protein bS18A, found in Rhodococcus jostii (strain RHA1).